The following is a 137-amino-acid chain: MRILGLDVGTKTVGVAISDEMGWTAQGLETIKINEERGQFGFDRISELVKQYDVDKIVVGLPKNMNGTIGPRGEACQQFAENLRELLQLDVVMWDERLSTMAAERLLISADVSRKKRKQVIDKMAAVVILQGFLDSK.

It belongs to the YqgF nuclease family.

Its subcellular location is the cytoplasm. In terms of biological role, could be a nuclease involved in processing of the 5'-end of pre-16S rRNA. The chain is Putative pre-16S rRNA nuclease from Bacillus cereus (strain 03BB102).